The primary structure comprises 198 residues: Nucleoplasmin (198 aa).

Positions Ser-35–Asp-38 are acidic tract A1. Residues Ser-125 to Glu-145 show a composition bias toward acidic residues. A disordered region spans residues Ser-125–Lys-198. The acidic tract A2 stretch occupies residues Glu-128–Glu-145. Residues Ala-150–Lys-167 are compositionally biased toward basic residues. Residues Lys-152–Lys-167 carry the Bipartite nuclear localization signal motif. The acidic tract A3 stretch occupies residues Glu-172–Glu-174. Residues Lys-183–Lys-198 are compositionally biased toward basic residues.

This sequence belongs to the nucleoplasmin family. Homopentamer. In terms of tissue distribution, expressed in oocytes.

It is found in the nucleus. In terms of biological role, acts as a chaperone for histones, such as histone H2A-H2B, and thus regulates the assembly of nucleosome cores. Involved in chromatin remodeling, especially during fertilization and early embryonic development. May be involved in sperm chromatin decondensation during fertilization. The polypeptide is Nucleoplasmin (Rhinella marina (Cane toad)).